A 347-amino-acid chain; its full sequence is Phosphate acyltransferase (347 aa).

Belongs to the PlsX family. As to quaternary structure, homodimer. Probably interacts with PlsY.

It localises to the cytoplasm. The catalysed reaction is a fatty acyl-[ACP] + phosphate = an acyl phosphate + holo-[ACP]. The protein operates within lipid metabolism; phospholipid metabolism. Functionally, catalyzes the reversible formation of acyl-phosphate (acyl-PO(4)) from acyl-[acyl-carrier-protein] (acyl-ACP). This enzyme utilizes acyl-ACP as fatty acyl donor, but not acyl-CoA. This is Phosphate acyltransferase from Sinorhizobium medicae (strain WSM419) (Ensifer medicae).